Reading from the N-terminus, the 197-residue chain is Putative RING-H2 finger protein ATL71 (197 aa).

The chain crosses the membrane as a helical span at residues 20 to 40 (MGGLAYGIGVSIGILMLITTI). The interval 53–80 (SASPTTTPRTRRRQRESNGTLPPGQERF) is disordered. An RING-type; atypical zinc finger spans residues 129 to 171 (CSICLADYKKMDMIRVLPDCNHLFHDNCVDPWLRLHPTCPVCR).

This sequence belongs to the RING-type zinc finger family. ATL subfamily.

Its subcellular location is the membrane. It carries out the reaction S-ubiquitinyl-[E2 ubiquitin-conjugating enzyme]-L-cysteine + [acceptor protein]-L-lysine = [E2 ubiquitin-conjugating enzyme]-L-cysteine + N(6)-ubiquitinyl-[acceptor protein]-L-lysine.. The protein operates within protein modification; protein ubiquitination. In Arabidopsis thaliana (Mouse-ear cress), this protein is Putative RING-H2 finger protein ATL71 (ATL71).